Consider the following 762-residue polypeptide: Phospholipase D alpha 4 (762 aa).

In terms of domain architecture, C2 spans 1–116 (MELEEQKKYF…VINGFFPLIA (116 aa)). Aspartate 172 lines the Ca(2+) pocket. Residues 301–339 (TAFAHHQKTITLDTRVTNSSTKEREIMSFLGGFDLCDGR) form the PLD phosphodiesterase 1 domain. Active-site residues include histidine 306, lysine 308, and aspartate 313. A 1,2-diacyl-sn-glycero-3-phosphate is bound at residue histidine 306. Residues histidine 345 and histidine 377 each contribute to the Ca(2+) site. Residues glutamine 477 and histidine 615 each contribute to the a 1,2-diacyl-sn-glycero-3-phosphate site. A PLD phosphodiesterase 2 domain is found at 610-637 (FMVYVHSKLMIVDDTYILIGSANINQRS). Active-site residues include histidine 615, lysine 617, and aspartate 622. Glutamate 671 provides a ligand contact to Ca(2+).

It belongs to the phospholipase D family. C2-PLD subfamily. The cofactor is Ca(2+). Expressed in roots, leaves, stems, siliques,flowers and inflorescences.

Its subcellular location is the cell membrane. It catalyses the reaction a 1,2-diacyl-sn-glycero-3-phosphocholine + H2O = a 1,2-diacyl-sn-glycero-3-phosphate + choline + H(+). Functionally, hydrolyzes glycerol-phospholipids at the terminal phosphodiesteric bond to generate phosphatidic acids (PA). Promotes growth and plays a role in nitrogen signaling. The polypeptide is Phospholipase D alpha 4 (Arabidopsis thaliana (Mouse-ear cress)).